The sequence spans 110 residues: Flagellar hook-basal body complex protein FliE (110 aa).

It belongs to the FliE family.

It localises to the bacterial flagellum basal body. This chain is Flagellar hook-basal body complex protein FliE, found in Pseudomonas entomophila (strain L48).